The primary structure comprises 375 residues: Chaperone protein DnaJ (375 aa).

A J domain is found at 4–69; the sequence is DLYETLGVQK…QKRAAYDRYG (66 aa). Residues 133 to 211 form a CR-type zinc finger; it reads GKTAQIRVPT…CHGQGRVVEE (79 aa). Zn(2+) is bound by residues Cys146, Cys149, Cys163, Cys166, Cys185, Cys188, Cys199, and Cys202. CXXCXGXG motif repeat units lie at residues 146–153, 163–170, 185–192, and 199–206; these read CDVCTGTG, CGTCQGTG, CPTCGGRG, and CTKCHGQG.

This sequence belongs to the DnaJ family. In terms of assembly, homodimer. Zn(2+) is required as a cofactor.

It localises to the cytoplasm. In terms of biological role, participates actively in the response to hyperosmotic and heat shock by preventing the aggregation of stress-denatured proteins and by disaggregating proteins, also in an autonomous, DnaK-independent fashion. Unfolded proteins bind initially to DnaJ; upon interaction with the DnaJ-bound protein, DnaK hydrolyzes its bound ATP, resulting in the formation of a stable complex. GrpE releases ADP from DnaK; ATP binding to DnaK triggers the release of the substrate protein, thus completing the reaction cycle. Several rounds of ATP-dependent interactions between DnaJ, DnaK and GrpE are required for fully efficient folding. Also involved, together with DnaK and GrpE, in the DNA replication of plasmids through activation of initiation proteins. This is Chaperone protein DnaJ from Sinorhizobium medicae (strain WSM419) (Ensifer medicae).